Here is an 88-residue protein sequence, read N- to C-terminus: Serine protease inhibitor Kazal-type 11 (88 aa).

An N-terminal signal peptide occupies residues 1–24 (MSSTWIKFLFILTLVLLPYFVAES). Positions 32–87 (LRKVPNCTLYKSESDCSRTLIPVCADNQMTYYNACYFCLEQLVSPIKYKYHGICTK) constitute a Kazal-like domain. Asparagine 37 carries N-linked (GlcNAc...) asparagine glycosylation. 3 cysteine pairs are disulfide-bonded: cysteine 38–cysteine 69, cysteine 47–cysteine 66, and cysteine 55–cysteine 85.

Expressed in epydiymis, in the caput. Also expressed in seminal vesicles.

The protein localises to the secreted. Functionally, probable serine protease inhibitor. In Mus musculus (Mouse), this protein is Serine protease inhibitor Kazal-type 11 (Spink11).